A 560-amino-acid polypeptide reads, in one-letter code: Arginine--tRNA ligase (560 aa).

The 'HIGH' region motif lies at 121-131; that stretch reads PNIAKPFSMGH.

It belongs to the class-I aminoacyl-tRNA synthetase family. In terms of assembly, monomer.

It is found in the cytoplasm. The enzyme catalyses tRNA(Arg) + L-arginine + ATP = L-arginyl-tRNA(Arg) + AMP + diphosphate. The sequence is that of Arginine--tRNA ligase from Exiguobacterium sp. (strain ATCC BAA-1283 / AT1b).